Reading from the N-terminus, the 217-residue chain is Octanoyltransferase (217 aa).

A BPL/LPL catalytic domain is found at 32 to 207; it reads SESPDELWIV…TFSQLLGYQH (176 aa). Residues 71–78, 138–140, and 151–153 contribute to the substrate site; these read RGGQVTYH, SLG, and GLA. Cysteine 169 acts as the Acyl-thioester intermediate in catalysis.

Belongs to the LipB family.

It is found in the cytoplasm. The enzyme catalyses octanoyl-[ACP] + L-lysyl-[protein] = N(6)-octanoyl-L-lysyl-[protein] + holo-[ACP] + H(+). The protein operates within protein modification; protein lipoylation via endogenous pathway; protein N(6)-(lipoyl)lysine from octanoyl-[acyl-carrier-protein]: step 1/2. Functionally, catalyzes the transfer of endogenously produced octanoic acid from octanoyl-acyl-carrier-protein onto the lipoyl domains of lipoate-dependent enzymes. Lipoyl-ACP can also act as a substrate although octanoyl-ACP is likely to be the physiological substrate. The sequence is that of Octanoyltransferase from Shewanella sp. (strain W3-18-1).